A 359-amino-acid polypeptide reads, in one-letter code: Putative X-Core fused protein (359 aa).

Disordered regions lie at residues 25 to 48 (SRGR…VPAD) and 312 to 359 (NAPI…ESQC). Residues 325–352 (VRRRGRSPRRRTPSPRRRRSESPRRRRS) are compositionally biased toward basic residues.

This is Putative X-Core fused protein from Homo sapiens (Human).